The sequence spans 522 residues: Glutamate--cysteine ligase, chloroplastic (522 aa).

The transit peptide at 1-45 directs the protein to the chloroplast; that stretch reads MALMSQAGSSHCIYSEKMKCISGHSSITSNMEMLKMKDICFGNIS. Cysteines 186 and 406 form a disulfide.

This sequence belongs to the carboxylate-amine ligase family. Glutamate--cysteine ligase type 2 subfamily. In terms of assembly, homodimer or monomer when oxidized or reduced, respectively. Post-translationally, the Cys-186-Cys-406 disulfide bridge is known to modulate the enzyme activity according to the redox status. The oxidized form constitutes the active enzyme.

The protein resides in the plastid. Its subcellular location is the chloroplast. The catalysed reaction is L-cysteine + L-glutamate + ATP = gamma-L-glutamyl-L-cysteine + ADP + phosphate + H(+). It functions in the pathway sulfur metabolism; glutathione biosynthesis; glutathione from L-cysteine and L-glutamate: step 1/2. The protein is Glutamate--cysteine ligase, chloroplastic (GSH1) of Nicotiana tabacum (Common tobacco).